A 346-amino-acid chain; its full sequence is Tryptophan--tRNA ligase (346 aa).

Residues 21–23 and 30–31 contribute to the ATP site; these read QPT and GN. Residues 22 to 31 carry the 'HIGH' region motif; sequence PTADSYHLGN. Asp147 is an L-tryptophan binding site. ATP contacts are provided by residues 159 to 161, Ile198, and 207 to 211; these read GED and KMSKS. The 'KMSKS' region signature appears at 207–211; the sequence is KMSKS.

Belongs to the class-I aminoacyl-tRNA synthetase family. In terms of assembly, homodimer.

It is found in the cytoplasm. The catalysed reaction is tRNA(Trp) + L-tryptophan + ATP = L-tryptophyl-tRNA(Trp) + AMP + diphosphate + H(+). Catalyzes the attachment of tryptophan to tRNA(Trp). The chain is Tryptophan--tRNA ligase from Corynebacterium efficiens (strain DSM 44549 / YS-314 / AJ 12310 / JCM 11189 / NBRC 100395).